We begin with the raw amino-acid sequence, 298 residues long: Inosose dehydratase (298 aa).

It belongs to the IolE/MocC family. The cofactor is glutathione. It depends on Co(2+) as a cofactor. Mn(2+) serves as cofactor.

It catalyses the reaction scyllo-inosose = 3D-3,5/4-trihydroxycyclohexane-1,2-dione + H2O. Its function is as follows. Catalyzes the dehydration of inosose (2-keto-myo-inositol, 2KMI or 2,4,6/3,5-pentahydroxycyclohexanone) to 3D-(3,5/4)-trihydroxycyclohexane-1,2-dione (D-2,3-diketo-4-deoxy-epi-inositol). This is Inosose dehydratase from Yersinia enterocolitica serotype O:8 / biotype 1B (strain NCTC 13174 / 8081).